The primary structure comprises 641 residues: White-opaque regulator 3 (641 aa).

A compositionally biased stretch (polar residues) spans 13-27; it reads ANVNHQQLSQDTNSI. Disordered stretches follow at residues 13–38, 146–245, and 258–287; these read ANVNHQQLSQDTNSIPQQQLQQQQQP, QLAS…PMTR, and PIIYPKSSNSTNGNNSNGQNSSSIPPPEPR. Low complexity-rich tracts occupy residues 28-38 and 151-160; these read PQQQLQQQQQP and QNQDQNQSQN. Polar residues predominate over residues 161-172; that stretch reads RYEQSSMTSIHT. Residues 173-184 show a composition bias toward low complexity; sequence NDNSSSVNNSPN. The span at 193–204 shows a compositional bias: polar residues; sequence STFQPQHSNEGS. 2 stretches are compositionally biased toward low complexity: residues 216–242 and 264–280; these read QQQQQPQQQQQPQQQQQPQQQQQPQQP and SSNSTNGNNSNGQNSSS. A dksA C4-type zinc finger spans residues 317–337; it reads CRRCGSEIPLAERRFVLCPSC. Disordered stretches follow at residues 366–409, 480–507, 522–550, and 568–641; these read LSKE…KVCQ, MSHQYIQPPPPPPPPLMTGHHQFQPQPH, NSGVAGIQQPNNGMVVGDQQQQQQQHNGS, and LQLQ…YPNN. A compositionally biased stretch (basic and acidic residues) spans 379 to 400; it reads QNNKSNEDQNNESRRGSQEKPA. A compositionally biased stretch (pro residues) spans 486–495; it reads QPPPPPPPPL. Residues 522 to 533 are compositionally biased toward polar residues; it reads NSGVAGIQQPNN. Residues 569 to 579 show a composition bias toward low complexity; sequence QLQQQQQQQQQ. The span at 597–606 shows a compositional bias: pro residues; it reads SFPPPPPPPL. The segment covering 610–641 has biased composition (low complexity); it reads QHQGLQQYSHAQQQQQQQHQQQQPYHQEYPNN.

It is found in the nucleus. Functionally, transcription factor that modulates the white-opaque switch. The polypeptide is White-opaque regulator 3 (WOR3) (Candida albicans (strain SC5314 / ATCC MYA-2876) (Yeast)).